The sequence spans 443 residues: ATP-dependent protease ATPase subunit HslU (443 aa).

ATP-binding positions include Ile18, 60 to 65 (GVGKTE), Asp256, Glu321, and Arg393.

The protein belongs to the ClpX chaperone family. HslU subfamily. In terms of assembly, a double ring-shaped homohexamer of HslV is capped on each side by a ring-shaped HslU homohexamer. The assembly of the HslU/HslV complex is dependent on binding of ATP.

The protein localises to the cytoplasm. Its function is as follows. ATPase subunit of a proteasome-like degradation complex; this subunit has chaperone activity. The binding of ATP and its subsequent hydrolysis by HslU are essential for unfolding of protein substrates subsequently hydrolyzed by HslV. HslU recognizes the N-terminal part of its protein substrates and unfolds these before they are guided to HslV for hydrolysis. The protein is ATP-dependent protease ATPase subunit HslU of Histophilus somni (strain 2336) (Haemophilus somnus).